The following is a 1254-amino-acid chain: MFPFQPMYPMQPMPYRNPFAAPRRPWFPRTDPFLAMQVQELTRSMANLTFKQRRGAPPEGPPAKKSKREAPQKQRGGQRKKKKNEGKKKAKTGPPNLKTQNGNKKKTNKKPGKRQRMVMKLESDKTFPIMLEGKINGYACVVGGKLFRPMHVEGKIDNDVLAALKTKKASKYDLEYADVPQNMRADTFKYTHEKPQGYYSWHHGAVQYENGRFTVPRGVGARGDSGRPILDNQGRVVAIVLGGVNEGSRTALSVVMWNEKGVTVKYTPENCEQWSLVTTMCLLANVTFPCAQPPICYDRKPAETLAMLSANVDNPGYDELLKAAVTCPGRKRRSTEELFKEYKLTRPYMARCVRCAVGSCHSPIAIEAVKSDGHDGYVRLQTSSQYGLDPSGNLKSRTMRYNMYGTIEEIPLHQVSLHTSRPCHIVDGHGYFLLARCPAGDSITMEFKKDSVTHSCSVPYEVKFNPVGRELYTHPPEHGAEQACQVYAHDAQNRGAYVEMHLPGSEVDSSLVSLSSGLVSVTPPAGTSALVECECSGTTISKTINKTKQFSQCTKKEQCRAYRLQNDKWVYNSDKLPKAAGATLKGKLHVPFLLADGKCTVPLAPEPMITFGFRSVSLKLHPKYPTYLTTRELADEPHYTHELISEPSVRNFSVTAKGWEFVWGNHPPKRFWAQETAPGNPHGLPHEVIVHYYHRYPMSTITGLSICAAIVAVSIAASTWLLCRSRASCLTPYRLTPNAKMPLCLAVLCCARSARAETTWESLDHLWNNNQQMFWTQLLIPLAALIVVTRLLKCMCCVVPFLVVAGAAGAGAYEHATTMPNQAGISYNTIVNRAGYAPLPISITPTKIKLIPTVNLEYVTCHYKTGMDSPTIKCCGSQECTPTYRPDEQCKVFAGVYPFMWGGAYCFCDTENTQISKAYVMKSEDCLADHAAAYKAHTASVQALLNITVGEHSTVTTVYVNGETPVNFNGVKLTAGPLSTAWTPFDRKIVQYAGEIYNYDFPEYGAGQPGAFGDIQLRTVSSSDLYANTNLVLQRPKAGAIHVPYTQAPSGFEQWKKDKAPSLKFTAPFGCEIYTNPIRAENCAVGSIPLAFDIPDALFTRVSETPTLSAAECTLNECVYSSDFGGIATVKYSASKSGKCAVHVPSGTATLKEASVELAEQGSVTIHFSTANIHPEFRLQICTSFVTCKGDCHPPKDHIVTHPQYHAQTFTAAVSKTAWTWLTSLLGGSAVIIIIGLVLATLVAMYVLTNQKHN.

The interval 1-33 (MFPFQPMYPMQPMPYRNPFAAPRRPWFPRTDPF) is necessary for nucleocapsid assembly and virus assembly. The host transcription inhibition stretch occupies residues 33–68 (FLAMQVQELTRSMANLTFKQRRGAPPEGPPAKKSKR). The Supraphysiological nuclear export signal signature appears at 41–48 (LTRSMANL). Asn47 carries N-linked (GlcNAc...) asparagine; by host glycosylation. The segment at 48–118 (LTFKQRRGAP…KKPGKRQRMV (71 aa)) is disordered. Positions 64–68 (KKSKR) match the Nuclear localization signal motif. Residues 76–91 (GGQRKKKKNEGKKKAK) show a composition bias toward basic residues. A binding to the viral RNA region spans residues 90-126 (AKTGPPNLKTQNGNKKKTNKKPGKRQRMVMKLESDKT). A phosphothreonine mark is found at Thr92 and Thr107. Basic residues predominate over residues 103-117 (NKKKTNKKPGKRQRM). Residues 111–125 (PGKRQRMVMKLESDK) form a ribosome-binding region. Ser123 carries the phosphoserine modification. The region spanning 125-274 (KTFPIMLEGK…KYTPENCEQW (150 aa)) is the Peptidase S3 domain. Thr126 carries the post-translational modification Phosphothreonine. The active-site Charge relay system is the His151. The segment at 167-172 (KKASKY) is interaction with spike glycoprotein E2. Residues Asp173 and Ser225 each act as charge relay system in the active site. An interaction with spike glycoprotein E2 region spans residues 259-263 (EKGVT). Positions 275-286 (SLVTTMCLLANV) are functions as an uncleaved signal peptide for the precursor of protein E3/E2. Residues 275–702 (SLVTTMCLLA…YHRYPMSTIT (428 aa)) lie on the Extracellular side of the membrane. Disulfide bonds link Cys281–Cys290, Cys352–Cys456, Cys355–Cys360, Cys423–Cys437, Cys484–Cys599, Cys533–Cys559, and Cys535–Cys553. N-linked (GlcNAc...) asparagine; by host glycosylation occurs at Asn285. Residues Asn545 and Asn651 are each glycosylated (N-linked (GlcNAc...) asparagine; by host). The chain crosses the membrane as a helical span at residues 703–723 (GLSICAAIVAVSIAASTWLLC). Residues 724 to 728 (RSRAS) are interaction with the capsid protein. Topologically, residues 724 to 756 (RSRASCLTPYRLTPNAKMPLCLAVLCCARSARA) are cytoplasmic. S-palmitoyl cysteine; by host attachment occurs at residues Cys729, Cys749, and Cys750. A disulfide bridge links Cys729 with Cys750. The interval 735 to 754 (LTPNAKMPLCLAVLCCARSA) is transient transmembrane before p62-6K protein processing. Topologically, residues 757 to 768 (ETTWESLDHLWN) are extracellular. A helical transmembrane segment spans residues 769–789 (NNQQMFWTQLLIPLAALIVVT). Position 790 (Arg790) is a topological domain, cytoplasmic. Residues 791–811 (LLKCMCCVVPFLVVAGAAGAG) traverse the membrane as a helical segment. The Extracellular portion of the chain corresponds to 812-1224 (AYEHATTMPN…SKTAWTWLTS (413 aa)). 4 disulfides stabilise this stretch: Cys861–Cys926, Cys874–Cys906, Cys875–Cys908, and Cys880–Cys890. Residues 896-913 (VYPFMWGGAYCFCDTENT) form an E1 fusion peptide loop region. Asn946 and Asn1082 each carry an N-linked (GlcNAc...) asparagine; by host glycan. 4 disulfide bridges follow: Cys1071–Cys1083, Cys1113–Cys1188, Cys1118–Cys1192, and Cys1140–Cys1182. Residues 1225–1245 (LLGGSAVIIIIGLVLATLVAM) traverse the membrane as a helical segment. Topologically, residues 1246–1254 (YVLTNQKHN) are cytoplasmic.

As to quaternary structure, homodimer. Homomultimer. Interacts with host karyopherin KPNA4; this interaction allows the nuclear import of the viral capsid protein. Interacts with spike glycoprotein E2. Interacts with host IRAK1; the interaction leads to inhibition of IRAK1-dependent signaling. Part of a tetrameric complex composed of host CRM1, host importin alpha/beta dimer and the viral capsid; this complex blocks the receptor-mediated transport through the nuclear pore. Interacts with host phosphatase PPP1CA; this interaction dephosphorylates the capsid protein, which increases its ability to bind to the viral genome. In terms of assembly, the precursor of protein E3/E2 and E1 form a heterodimer shortly after synthesis. Interacts with spike glycoprotein E2. The precursor of protein E3/E2 and E1 form a heterodimer shortly after synthesis. Processing of the precursor of protein E3/E2 into E2 and E3 results in a heterodimer of the spike glycoproteins E2 and E1. Spike at virion surface are constituted of three E2-E1 heterodimers. After target cell attachment and endocytosis, E1 change conformation to form homotrimers. Interacts with 6K protein. Interacts with host LDLRAD3; this interaction mediates viral entry to the host cell. As to quaternary structure, interacts with spike glycoprotein E1. Processing of the precursor of protein E3/E2 into E2 and E3 results in a heterodimer of the spike glycoproteins E2 and E1. Spike at virion surface are constituted of a trimer of E2-E1 heterodimers. Interacts with 6K protein. Interacts with host LDLRAD3; this interaction mediates viral entry to the host cell. In terms of assembly, oligomer. Interacts with spike glycoprotein E1. Interacts with spike glycoprotein E2. In terms of processing, structural polyprotein: Specific enzymatic cleavages in vivo yield mature proteins. Capsid protein is auto-cleaved during polyprotein translation, unmasking a signal peptide at the N-terminus of the precursor of E3/E2. The remaining polyprotein is then targeted to the host endoplasmic reticulum, where host signal peptidase cleaves it into pE2, 6K and E1 proteins. pE2 is further processed to mature E3 and E2 by host furin in trans-Golgi vesicle. Phosphorylated on serine and threonine residues. Post-translationally, palmitoylated via thioester bonds. These palmitoylations may induce disruption of the C-terminus transmembrane. This would result in the reorientation of E2 C-terminus from lumenal to cytoplasmic side. In terms of processing, N-glycosylated. Palmitoylated via thioester bonds.

It localises to the virion. The protein resides in the host cytoplasm. It is found in the host cell membrane. The protein localises to the host nucleus. Its subcellular location is the virion membrane. It localises to the host Golgi apparatus. The protein resides in the host trans-Golgi network. It is found in the host endoplasmic reticulum. It carries out the reaction Autocatalytic release of the core protein from the N-terminus of the togavirus structural polyprotein by hydrolysis of a -Trp-|-Ser- bond.. Forms an icosahedral capsid with a T=4 symmetry composed of 240 copies of the capsid protein surrounded by a lipid membrane through which penetrate 80 spikes composed of trimers of E1-E2 heterodimers. The capsid protein binds to the viral RNA genome at a site adjacent to a ribosome binding site for viral genome translation following genome release. Possesses a protease activity that results in its autocatalytic cleavage from the nascent structural protein. Following its self-cleavage, the capsid protein transiently associates with ribosomes, and within several minutes the protein binds to viral RNA and rapidly assembles into icosahedric core particles. The resulting nucleocapsid eventually associates with the cytoplasmic domain of the spike glycoprotein E2 at the cell membrane, leading to budding and formation of mature virions. In case of infection, new virions attach to target cells and after clathrin-mediated endocytosis their membrane fuses with the host endosomal membrane. This leads to the release of the nucleocapsid into the cytoplasm, followed by an uncoating event necessary for the genomic RNA to become accessible. The uncoating might be triggered by the interaction of capsid proteins with ribosomes. Binding of ribosomes would release the genomic RNA since the same region is genomic RNA-binding and ribosome-binding. Specifically inhibits interleukin-1 receptor-associated kinase 1/IRAK1-dependent signaling during viral entry, representing a means by which the alphaviruses may evade innate immune detection and activation prior to viral gene expression. Inhibits host transcription. Forms a tetrameric complex with XPO1/CRM1 and the nuclear import receptor importin. This complex blocks the central channel of host nuclear pores thereby inhibiting the receptor-mediated nuclear transport and thus the host mRNA and rRNA transcription. The inhibition of transcription is linked to a cytopathic effect on the host cell. Functionally, provides the signal sequence for the translocation of the precursor of protein E3/E2 to the host endoplasmic reticulum. Furin-cleaved E3 remains associated with spike glycoprotein E1 and mediates pH protection of the latter during the transport via the secretory pathway. After virion release from the host cell, the assembly protein E3 is gradually released in the extracellular space. Its function is as follows. Plays a role in viral attachment to target host cell, by binding to the cell receptor LDLRAD3. Synthesized as a p62 precursor which is processed by furin at the cell membrane just before virion budding, giving rise to E2-E1 heterodimer. The p62-E1 heterodimer is stable, whereas E2-E1 is unstable and dissociate at low pH. p62 is processed at the last step, presumably to avoid E1 fusion activation before its final export to cell surface. E2 C-terminus contains a transitory transmembrane that would be disrupted by palmitoylation, resulting in reorientation of the C-terminal tail from lumenal to cytoplasmic side. This step is critical since E2 C-terminus is involved in budding by interacting with capsid proteins. This release of E2 C-terminus in cytoplasm occurs lately in protein export, and precludes premature assembly of particles at the endoplasmic reticulum membrane. In terms of biological role, acts as a viroporin that participates in virus glycoprotein processing and transport to the plasma membrane, cell permeabilization and budding of viral particles. Disrupts the calcium homeostasis of the cell, probably at the endoplasmic reticulum level. This leads to cytoplasmic calcium elevation. Because of its lipophilic properties, the 6K protein is postulated to influence the selection of lipids that interact with the transmembrane domains of the glycoproteins, which, in turn, affects the deformability of the bilayer required for the extreme curvature that occurs as budding proceeds. Present in low amount in virions, about 3% compared to viral glycoproteins. Class II viral fusion protein. Fusion activity is inactive as long as E1 is bound to E2 in mature virion. After virus attachment to cell receptor LDLRAD3 and endocytosis, acidification of the endosome induce dissociation of E1/E2 heterodimer and concomitant trimerization of the E1 subunits. This E1 trimer is fusion active, and promotes release of viral nucleocapsid in cytoplasm after endosome and viral membrane fusion. Efficient fusion requires the presence of cholesterol and sphingolipid in the target membrane. In Venezuelan equine encephalitis virus (strain Everglades Fe3-7c) (VEEV), this protein is Structural polyprotein.